A 344-amino-acid polypeptide reads, in one-letter code: Nuclear distribution protein nudE-like 1-B (344 aa).

The stretch at 26 to 189 forms a coiled coil; sequence YKKSCHDAQE…ELAVRERTSD (164 aa).

It belongs to the nudE family. In terms of processing, phosphorylated in mitosis.

The protein resides in the cytoplasm. The protein localises to the cytoskeleton. It is found in the microtubule organizing center. Its subcellular location is the centrosome. It localises to the spindle. Its function is as follows. Required for organization of the cellular microtubule array and microtubule anchoring at the centrosome. Positively regulates the activity of the minus-end directed microtubule motor protein dynein. May enhance dynein-mediated microtubule sliding by targeting dynein to the microtubule plus end. In Danio rerio (Zebrafish), this protein is Nuclear distribution protein nudE-like 1-B (ndel1b).